The primary structure comprises 280 residues: Diaminopimelate epimerase (280 aa).

Residues N13 and N66 each coordinate substrate. The Proton donor role is filled by C75. Residues 76-77 (GN), N162, N195, and 213-214 (ER) each bind substrate. The active-site Proton acceptor is the C222. Residue 223–224 (GT) participates in substrate binding.

The protein belongs to the diaminopimelate epimerase family. In terms of assembly, homodimer.

It localises to the cytoplasm. The catalysed reaction is (2S,6S)-2,6-diaminopimelate = meso-2,6-diaminopimelate. It functions in the pathway amino-acid biosynthesis; L-lysine biosynthesis via DAP pathway; DL-2,6-diaminopimelate from LL-2,6-diaminopimelate: step 1/1. Functionally, catalyzes the stereoinversion of LL-2,6-diaminopimelate (L,L-DAP) to meso-diaminopimelate (meso-DAP), a precursor of L-lysine and an essential component of the bacterial peptidoglycan. In Synechococcus elongatus (strain ATCC 33912 / PCC 7942 / FACHB-805) (Anacystis nidulans R2), this protein is Diaminopimelate epimerase.